A 565-amino-acid chain; its full sequence is Urocanate hydratase (565 aa).

Residues 58–59, Q136, 182–184, E202, R207, 245–246, 266–270, 276–277, and Y325 contribute to the NAD(+) site; these read GG, GMG, NA, QTSAH, and YL. Residue C413 is part of the active site. G495 contacts NAD(+).

This sequence belongs to the urocanase family. The cofactor is NAD(+).

The protein localises to the cytoplasm. The catalysed reaction is 4-imidazolone-5-propanoate = trans-urocanate + H2O. It participates in amino-acid degradation; L-histidine degradation into L-glutamate; N-formimidoyl-L-glutamate from L-histidine: step 2/3. In terms of biological role, catalyzes the conversion of urocanate to 4-imidazolone-5-propionate. In Vibrio cholerae serotype O1 (strain ATCC 39541 / Classical Ogawa 395 / O395), this protein is Urocanate hydratase.